The following is a 93-amino-acid chain: Acylphosphatase (93 aa).

Residues 6-93 (RAHILVSGEV…GDLGPFSVRH (88 aa)) form the Acylphosphatase-like domain. Catalysis depends on residues arginine 21 and asparagine 39.

The protein belongs to the acylphosphatase family.

The catalysed reaction is an acyl phosphate + H2O = a carboxylate + phosphate + H(+). The sequence is that of Acylphosphatase (acyP) from Anaeromyxobacter sp. (strain Fw109-5).